The following is a 63-amino-acid chain: Potassium channel toxin MeuTXKalpha4 (63 aa).

Residues 1–28 form the signal peptide; sequence MSRLLIFILTAVVLSVIIDILNNSKVEG. 3 disulfides stabilise this stretch: C35/C53, C39/C59, and C43/C61.

It belongs to the short scorpion toxin superfamily. Potassium channel inhibitor family. Expressed by the venom gland.

The protein resides in the secreted. Its function is as follows. May block voltage-gated potassium channels (Kv). This Mesobuthus eupeus (Lesser Asian scorpion) protein is Potassium channel toxin MeuTXKalpha4.